Consider the following 262-residue polypeptide: Small ribosomal subunit protein eS4x (262 aa).

The S4 RNA-binding domain occupies 42 to 104 (LPLVLIIRNR…TNENFRLLYD (63 aa)).

It belongs to the eukaryotic ribosomal protein eS4 family.

Its subcellular location is the cytoplasm. This is Small ribosomal subunit protein eS4x (RPS4D) from Arabidopsis thaliana (Mouse-ear cress).